The sequence spans 351 residues: Photosystem II D2 protein 2 (351 aa).

Residues 39-59 (CAFLSIGGWFTGTTFVTSWYT) traverse the membrane as a helical segment. A chlorophyll a-binding site is contributed by histidine 116. A helical membrane pass occupies residues 123 to 139 (GFMLRQFEIARLVNVRP). Pheophytin a is bound by residues glutamine 128 and asparagine 141. The helical transmembrane segment at 151 to 164 (VFVSVFLMYPLGQS) threads the bilayer. Histidine 196 serves as a coordination point for chlorophyll a. A helical membrane pass occupies residues 206–226 (GALLCAIHGATVENTLFEDTK). The a plastoquinone site is built by histidine 213 and phenylalanine 260. Histidine 213 is a Fe cation binding site. Histidine 267 is a binding site for Fe cation. The chain crosses the membrane as a helical span at residues 277–293 (GLWASAIGLVGIALNMR).

The protein belongs to the reaction center PufL/M/PsbA/D family. PSII is composed of 1 copy each of membrane proteins PsbA, PsbB, PsbC, PsbD, PsbE, PsbF, PsbH, PsbI, PsbJ, PsbK, PsbL, PsbM, PsbT, PsbX, PsbY, PsbZ, Psb30/Ycf12, peripheral proteins PsbO, CyanoQ (PsbQ), PsbU, PsbV and a large number of cofactors. It forms dimeric complexes. The D1/D2 heterodimer binds P680, chlorophylls that are the primary electron donor of PSII, and subsequent electron acceptors. It shares a non-heme iron and each subunit binds pheophytin, quinone, additional chlorophylls, carotenoids and lipids. There is also a Cl(-1) ion associated with D1 and D2, which is required for oxygen evolution. The PSII complex binds additional chlorophylls, carotenoids and specific lipids. serves as cofactor.

It is found in the cellular thylakoid membrane. It carries out the reaction 2 a plastoquinone + 4 hnu + 2 H2O = 2 a plastoquinol + O2. Functionally, photosystem II (PSII) is a light-driven water:plastoquinone oxidoreductase that uses light energy to abstract electrons from H(2)O, generating O(2) and a proton gradient subsequently used for ATP formation. It consists of a core antenna complex that captures photons, and an electron transfer chain that converts photonic excitation into a charge separation. The D1/D2 (PsbA/PsbD) reaction center heterodimer binds P680, the primary electron donor of PSII as well as several subsequent electron acceptors. D2 is needed for assembly of a stable PSII complex. The polypeptide is Photosystem II D2 protein 2 (Acaryochloris marina (strain MBIC 11017)).